Consider the following 506-residue polypeptide: (+)-vincadifformine 19-hydroxylase (506 aa).

The Lumenal portion of the chain corresponds to 1–4; it reads MELD. Residues 5-25 traverse the membrane as a helical segment; sequence ECSPSIFIISFIFIAISIAIL. At 26-506 the chain is on the cytoplasmic side; it reads RRIRPKKTKA…DLHLIPTSYM (481 aa). Residue Cys450 coordinates heme.

Belongs to the cytochrome P450 family. Heme serves as cofactor. Accumulates progressively in roots.

It is found in the endoplasmic reticulum membrane. The enzyme catalyses (+)-vincadifformine + reduced [NADPH--hemoprotein reductase] + O2 = (+)-minovincinine + oxidized [NADPH--hemoprotein reductase] + H2O + H(+). The protein operates within alkaloid biosynthesis. With respect to regulation, the enantiomer (-)-vincadifformine acts as a competitive inhibitor. Component of the monoterpenoid indole alkaloids (MIAs, e.g. echitovenine, tabersonine, lochnericine, 19-hydroxytabersonine and horhammericine) biosynthetic pathway; MIAs are used in cancer treatment and other medical applications. Cytochrome P450 catalyzing the hydroxylation of (+)-vincadifformine to (+)-minovincinine. In Catharanthus roseus (Madagascar periwinkle), this protein is (+)-vincadifformine 19-hydroxylase.